A 256-amino-acid chain; its full sequence is Thiazole synthase (256 aa).

Catalysis depends on lysine 95, which acts as the Schiff-base intermediate with DXP. 1-deoxy-D-xylulose 5-phosphate-binding positions include glycine 156, 182-183 (AG), and 204-205 (NT).

It belongs to the ThiG family. In terms of assembly, homotetramer. Forms heterodimers with either ThiH or ThiS.

The protein resides in the cytoplasm. The catalysed reaction is [ThiS sulfur-carrier protein]-C-terminal-Gly-aminoethanethioate + 2-iminoacetate + 1-deoxy-D-xylulose 5-phosphate = [ThiS sulfur-carrier protein]-C-terminal Gly-Gly + 2-[(2R,5Z)-2-carboxy-4-methylthiazol-5(2H)-ylidene]ethyl phosphate + 2 H2O + H(+). Its pathway is cofactor biosynthesis; thiamine diphosphate biosynthesis. Catalyzes the rearrangement of 1-deoxy-D-xylulose 5-phosphate (DXP) to produce the thiazole phosphate moiety of thiamine. Sulfur is provided by the thiocarboxylate moiety of the carrier protein ThiS. In vitro, sulfur can be provided by H(2)S. This Escherichia coli O81 (strain ED1a) protein is Thiazole synthase.